Here is a 292-residue protein sequence, read N- to C-terminus: Large ribosomal subunit protein bL19m (292 aa).

The segment at 41-60 (SRFQSTGPSEPGGFKPPPKP) is disordered. Phosphoserine is present on serine 77.

It belongs to the bacterial ribosomal protein bL19 family. Component of the mitochondrial ribosome large subunit (39S) which comprises a 16S rRNA and about 50 distinct proteins.

Its subcellular location is the mitochondrion. This Mus musculus (Mouse) protein is Large ribosomal subunit protein bL19m (Mrpl19).